A 130-amino-acid polypeptide reads, in one-letter code: Small ribosomal subunit protein uS8 (130 aa).

This sequence belongs to the universal ribosomal protein uS8 family. In terms of assembly, part of the 30S ribosomal subunit. Contacts proteins S5 and S12.

Functionally, one of the primary rRNA binding proteins, it binds directly to 16S rRNA central domain where it helps coordinate assembly of the platform of the 30S subunit. This Aliivibrio salmonicida (strain LFI1238) (Vibrio salmonicida (strain LFI1238)) protein is Small ribosomal subunit protein uS8.